We begin with the raw amino-acid sequence, 299 residues long: ATP phosphoribosyltransferase (299 aa).

It belongs to the ATP phosphoribosyltransferase family. Long subfamily. Equilibrium between an active dimeric form, an inactive hexameric form and higher aggregates. Interconversion between the various forms is largely reversible and is influenced by the natural substrates and inhibitors of the enzyme. Requires Mg(2+) as cofactor.

It localises to the cytoplasm. It catalyses the reaction 1-(5-phospho-beta-D-ribosyl)-ATP + diphosphate = 5-phospho-alpha-D-ribose 1-diphosphate + ATP. It functions in the pathway amino-acid biosynthesis; L-histidine biosynthesis; L-histidine from 5-phospho-alpha-D-ribose 1-diphosphate: step 1/9. Feedback inhibited by histidine. Catalyzes the condensation of ATP and 5-phosphoribose 1-diphosphate to form N'-(5'-phosphoribosyl)-ATP (PR-ATP). Has a crucial role in the pathway because the rate of histidine biosynthesis seems to be controlled primarily by regulation of HisG enzymatic activity. The protein is ATP phosphoribosyltransferase of Shigella dysenteriae serotype 1 (strain Sd197).